A 217-amino-acid chain; its full sequence is Large ribosomal subunit protein uL3 (217 aa).

It belongs to the universal ribosomal protein uL3 family. Part of the 50S ribosomal subunit. Forms a cluster with proteins L14 and L19.

Functionally, one of the primary rRNA binding proteins, it binds directly near the 3'-end of the 23S rRNA, where it nucleates assembly of the 50S subunit. This is Large ribosomal subunit protein uL3 from Brachyspira hyodysenteriae (strain ATCC 49526 / WA1).